We begin with the raw amino-acid sequence, 461 residues long: D-phenylhydantoinase (461 aa).

A divalent metal cation-binding residues include His-59, His-61, and Lys-151. The residue at position 151 (Lys-151) is an N6-carboxylysine. A substrate-binding site is contributed by Tyr-156. 2 residues coordinate a divalent metal cation: His-182 and His-239. Ser-286 contributes to the substrate binding site. An a divalent metal cation-binding site is contributed by Asp-313. Asn-335 provides a ligand contact to substrate.

Belongs to the metallo-dependent hydrolases superfamily. Hydantoinase/dihydropyrimidinase family. In terms of assembly, homotetramer. A divalent metal cation serves as cofactor. Carboxylation allows a single lysine to coordinate two divalent metal cations.

It catalyses the reaction D-5-phenylhydantoin + H2O = N-carbamoyl-D-phenylglycine + H(+). In terms of biological role, catalyzes the stereospecific hydrolysis of the cyclic amide bond of D-hydantoin derivatives with an aromatic side chains at the 5'-position. Has no activity on dihydropyrimidines. The physiological function is unknown. In Escherichia coli O9:H4 (strain HS), this protein is D-phenylhydantoinase.